A 211-amino-acid chain; its full sequence is Protein-methionine-sulfoxide reductase heme-binding subunit MsrQ (211 aa).

A run of 4 helical transmembrane segments spans residues 10–30 (WLKVCLHLAGLLPFLWLVWAI), 82–102 (LWCFAWATLHLTSYALLELGV), 116–136 (PYLTLGIISWVILLALAFTST), and 153–173 (FVYLVAILAPIHYLWSVKIIS).

The protein belongs to the MsrQ family. As to quaternary structure, heterodimer of a catalytic subunit (MsrP) and a heme-binding subunit (MsrQ). FMN serves as cofactor. The cofactor is heme b.

Its subcellular location is the cell inner membrane. Part of the MsrPQ system that repairs oxidized periplasmic proteins containing methionine sulfoxide residues (Met-O), using respiratory chain electrons. Thus protects these proteins from oxidative-stress damage caused by reactive species of oxygen and chlorine generated by the host defense mechanisms. MsrPQ is essential for the maintenance of envelope integrity under bleach stress, rescuing a wide series of structurally unrelated periplasmic proteins from methionine oxidation, including the primary periplasmic chaperone SurA and the lipoprotein Pal. MsrQ provides electrons for reduction to the reductase catalytic subunit MsrP, using the quinone pool of the respiratory chain. The protein is Protein-methionine-sulfoxide reductase heme-binding subunit MsrQ of Shigella dysenteriae serotype 1 (strain Sd197).